The sequence spans 539 residues: Alpha-aminoadipic semialdehyde dehydrogenase (539 aa).

The N-terminal 26 residues, 1 to 26 (MLRLARPLCVQTVKASKLSRLWSRPA), are a transit peptide targeting the mitochondrion. An N6-acetyllysine; alternate mark is found at lysine 86, lysine 94, and lysine 97. Residues lysine 86, lysine 94, and lysine 97 each carry the N6-succinyllysine; alternate modification. Residues 192 to 194 (TAF), lysine 218, 258 to 259 (GT), 274 to 275 (GS), 274 to 279 (GSTQVG), and 296 to 297 (EL) contribute to the NAD(+) site. The active-site Proton acceptor is glutamate 296. Cysteine 330 functions as the Nucleophile in the catalytic mechanism. Residue threonine 331 coordinates (S)-2-amino-6-oxohexanoate. Glutamate 427 lines the NAD(+) pocket. Lysine 462 is modified (N6-acetyllysine). Glycine 489 and alanine 490 together coordinate (S)-2-amino-6-oxohexanoate. Position 500 is an N6-acetyllysine (lysine 500). Position 537 is an N6-succinyllysine (lysine 537).

Belongs to the aldehyde dehydrogenase family. As to quaternary structure, homotetramer. Abundant in kidney, liver, cochlea and outer hair cells but not inner hair cells or vestibular type I hair cells. Very low levels in lung, brain, intestine and pancreas.

Its subcellular location is the cytoplasm. The protein localises to the cytosol. It is found in the nucleus. It localises to the mitochondrion. The enzyme catalyses nonanal + NAD(+) + H2O = nonanoate + NADH + 2 H(+). It carries out the reaction (S)-2-amino-6-oxohexanoate + NAD(+) + H2O = L-2-aminoadipate + NADH + 2 H(+). The catalysed reaction is betaine aldehyde + NAD(+) + H2O = glycine betaine + NADH + 2 H(+). It catalyses the reaction an aldehyde + NAD(+) + H2O = a carboxylate + NADH + 2 H(+). The enzyme catalyses hexanal + NAD(+) + H2O = hexanoate + NADH + 2 H(+). It carries out the reaction octanal + NAD(+) + H2O = octanoate + NADH + 2 H(+). The catalysed reaction is (E)-non-2-enal + NAD(+) + H2O = (E)-non-2-enoate + NADH + 2 H(+). It catalyses the reaction (E)-4-hydroxynon-2-enal + NAD(+) + H2O = (E)-4-hydroxynon-2-enoate + NADH + 2 H(+). It participates in amine and polyamine biosynthesis; betaine biosynthesis via choline pathway; betaine from betaine aldehyde: step 1/1. Multifunctional enzyme mediating important protective effects. Metabolizes betaine aldehyde to betaine, an important cellular osmolyte and methyl donor. Protects cells from oxidative stress by metabolizing a number of lipid peroxidation-derived aldehydes. Involved in lysine catabolism. This chain is Alpha-aminoadipic semialdehyde dehydrogenase, found in Rattus norvegicus (Rat).